We begin with the raw amino-acid sequence, 629 residues long: RNA polymerase sigma factor RpoD (629 aa).

The tract at residues 183–228 (HNGLDEDFSDEDDEEESSNADVEDNEDEEDNESESTSDSSDSDNSI) is disordered. A compositionally biased stretch (acidic residues) spans 187–228 (DEDFSDEDDEEESSNADVEDNEDEEDNESESTSDSSDSDNSI). Positions 395–465 (MVEANLRLVI…TRSIADQART (71 aa)) are sigma-70 factor domain-2. An Interaction with polymerase core subunit RpoC motif is present at residues 419–422 (DLIQ). The tract at residues 474–550 (ETINKLNRIS…DSTLELPLDS (77 aa)) is sigma-70 factor domain-3. A sigma-70 factor domain-4 region spans residues 563-616 (VLEGLTPREAKVLRMRFGIDMNTDHTLEEVGKQFDVTRERIRQIEAKALRKLRH). Positions 589–608 (LEEVGKQFDVTRERIRQIEA) form a DNA-binding region, H-T-H motif.

Belongs to the sigma-70 factor family. RpoD/SigA subfamily. In terms of assembly, interacts transiently with the RNA polymerase catalytic core.

The protein resides in the cytoplasm. Functionally, sigma factors are initiation factors that promote the attachment of RNA polymerase to specific initiation sites and are then released. This sigma factor is the primary sigma factor during exponential growth. This Haemophilus influenzae (strain ATCC 51907 / DSM 11121 / KW20 / Rd) protein is RNA polymerase sigma factor RpoD.